The following is a 323-amino-acid chain: Acetyl-coenzyme A carboxylase carboxyl transferase subunit alpha (323 aa).

Positions 39–293 (RLSKKSQQLT…RRALADSLRQ (255 aa)) constitute a CoA carboxyltransferase C-terminal domain.

The protein belongs to the AccA family. As to quaternary structure, acetyl-CoA carboxylase is a heterohexamer composed of biotin carboxyl carrier protein (AccB), biotin carboxylase (AccC) and two subunits each of ACCase subunit alpha (AccA) and ACCase subunit beta (AccD).

It is found in the cytoplasm. It carries out the reaction N(6)-carboxybiotinyl-L-lysyl-[protein] + acetyl-CoA = N(6)-biotinyl-L-lysyl-[protein] + malonyl-CoA. Its pathway is lipid metabolism; malonyl-CoA biosynthesis; malonyl-CoA from acetyl-CoA: step 1/1. Its function is as follows. Component of the acetyl coenzyme A carboxylase (ACC) complex. First, biotin carboxylase catalyzes the carboxylation of biotin on its carrier protein (BCCP) and then the CO(2) group is transferred by the carboxyltransferase to acetyl-CoA to form malonyl-CoA. The chain is Acetyl-coenzyme A carboxylase carboxyl transferase subunit alpha from Burkholderia lata (strain ATCC 17760 / DSM 23089 / LMG 22485 / NCIMB 9086 / R18194 / 383).